Consider the following 492-residue polypeptide: Glutamyl-tRNA(Gln) amidotransferase subunit A (492 aa).

Active-site charge relay system residues include lysine 79 and serine 154. Serine 178 (acyl-ester intermediate) is an active-site residue.

It belongs to the amidase family. GatA subfamily. As to quaternary structure, heterotrimer of A, B and C subunits.

The enzyme catalyses L-glutamyl-tRNA(Gln) + L-glutamine + ATP + H2O = L-glutaminyl-tRNA(Gln) + L-glutamate + ADP + phosphate + H(+). Its function is as follows. Allows the formation of correctly charged Gln-tRNA(Gln) through the transamidation of misacylated Glu-tRNA(Gln) in organisms which lack glutaminyl-tRNA synthetase. The reaction takes place in the presence of glutamine and ATP through an activated gamma-phospho-Glu-tRNA(Gln). The chain is Glutamyl-tRNA(Gln) amidotransferase subunit A from Acinetobacter baumannii (strain ACICU).